The primary structure comprises 304 residues: Thyroxine 5-deiodinase (304 aa).

The disordered stretch occupies residues 1–23; the sequence is MPRQATSRLVVGEGEGSQGASGP. Over 1-44 the chain is Cytoplasmic; the sequence is MPRQATSRLVVGEGEGSQGASGPAATMLRSLLLHSLRLCAQTAS. The helical; Signal-anchor for type II membrane protein transmembrane segment at 45–67 threads the bilayer; sequence CLVLFPRFLGTAFMLWLLDFLCI. Over 68–304 the chain is Extracellular; sequence RKHFLGRRRR…QLHGARPRRV (237 aa). Positions 78-99 are disordered; sequence GQPEPEVELNSEGEEVPPDDPP. The segment covering 82-95 has biased composition (acidic residues); the sequence is PEVELNSEGEEVPP. Sec170 is a catalytic residue. Sec170 is a non-standard amino acid (selenocysteine).

It belongs to the iodothyronine deiodinase family. Monomer. Homodimer. May undergo minor heretodimerization with DIO1 and DIO2. As to expression, expressed in placenta and several fetal tissues.

It localises to the cell membrane. It is found in the endosome membrane. The catalysed reaction is 3,3',5'-triiodo-L-thyronine + iodide + A + H(+) = L-thyroxine + AH2. The enzyme catalyses 3,3'-diiodo-L-thyronine + iodide + A + H(+) = 3,3',5-triiodo-L-thyronine + AH2. It carries out the reaction 3-iodo-L-thyronine + iodide + A + H(+) = 3,5-diiodo-L-thyronine + AH2. It catalyses the reaction L-thyronine + iodide + A + H(+) = 3-iodo-L-thyronine + AH2. The catalysed reaction is 3',5'-diiodo-L-thyronine + iodide + A + H(+) = 3,3',5'-triiodo-L-thyronine + AH2. The enzyme catalyses 3'-iodo-L-thyronine + iodide + A + H(+) = 3,3'-diiodo-L-thyronine + AH2. It carries out the reaction 3,3',5'-triiodothyronamine + iodide + A + H(+) = 3,3',5,5'-tetraiodothyronamine + AH2. It catalyses the reaction 3',5'-diiodothyronamine + iodide + A + H(+) = 3,3',5'-triiodothyronamine + AH2. The catalysed reaction is 3,3'-diiodothyronamine + iodide + A + H(+) = 3,3',5-triiodothyronamine + AH2. The enzyme catalyses 3-iodothyronamine + iodide + A + H(+) = 3,5-diiodothyronamine + AH2. It carries out the reaction 3'-iodothyronamine + iodide + A + H(+) = 3,3'-diiodothyronamine + AH2. It catalyses the reaction thyronamine + iodide + A + H(+) = 3-iodothyronamine + AH2. In terms of biological role, plays a crucial role in the metabolism of thyroid hormones (TH) and has specific roles in TH activation and inactivation by deiodination. Catalyzes the deiodination of L-thyroxine (T4) to 3,3',5'-triiodothyronine (rT3), 3,5,3'-triiodothyronine (T3) to 3,3'-diiodothyronine (3,3'-T2), 3,5-diiodothyronine (3,5-T2) to 3-monoiodothyronine (3-T1), rT3 to 3',5'-diiodothyronine (3',5'-T2) and 3,3'-T2 to 3'-monoiodothyronine (3'-T1) via inner-ring deiodination (IRD). Catalyzes the deiodination of 3-T1 to L-thyronine (T0) via outer-ring deiodination (ORD). Catalyzes the tyrosyl ring deiodinations of 3,3',5,5'-tetraiodothyronamine, 3,3',5'-triiodothyronamine, 3,5,3'-triiodothyronamine, 3,5-diiodothyronamine, 3,3'-diiodothyronamine and 3-iodothyronamine. The sequence is that of Thyroxine 5-deiodinase (DIO3) from Homo sapiens (Human).